Here is a 148-residue protein sequence, read N- to C-terminus: Deoxyuridine 5'-triphosphate nucleotidohydrolase (148 aa).

Residues Arg68–Gly70, Asn81, Thr85–Asp87, and Lys95 contribute to the substrate site.

Belongs to the dUTPase family. Requires Mg(2+) as cofactor.

It carries out the reaction dUTP + H2O = dUMP + diphosphate + H(+). Its pathway is pyrimidine metabolism; dUMP biosynthesis; dUMP from dCTP (dUTP route): step 2/2. Functionally, this enzyme is involved in nucleotide metabolism: it produces dUMP, the immediate precursor of thymidine nucleotides and it decreases the intracellular concentration of dUTP so that uracil cannot be incorporated into DNA. This Rickettsia peacockii (strain Rustic) protein is Deoxyuridine 5'-triphosphate nucleotidohydrolase.